An 862-amino-acid chain; its full sequence is Eukaryotic translation initiation factor 3 subunit C (862 aa).

Residues 1 to 81 (MSSRFFYGGG…EEEEKVTVVK (81 aa)) form a disordered region. A compositionally biased stretch (acidic residues) spans 17–54 (SSDEEELYSDREEEEKSEEEESSEEEDETSEEEESDEE). Residues 55–65 (TGARKFLKDVA) show a composition bias toward basic and acidic residues. Over residues 66–75 (SDSEEEEEEE) the composition is skewed to acidic residues. A PCI domain is found at 600–774 (FHMHINLELL…NAIVFRKGVE (175 aa)). The interval 813-862 (RDQGAGARGGRGSGRGGQARGGPRFPGGQQGRRPGGQQFGGGALGGAIKA) is disordered. A compositionally biased stretch (gly residues) spans 818-862 (GARGGRGSGRGGQARGGPRFPGGQQGRRPGGQQFGGGALGGAIKA).

Belongs to the eIF-3 subunit C family. In terms of assembly, component of the eukaryotic translation initiation factor 3 (eIF-3) complex.

It is found in the cytoplasm. Functionally, component of the eukaryotic translation initiation factor 3 (eIF-3) complex, which is involved in protein synthesis of a specialized repertoire of mRNAs and, together with other initiation factors, stimulates binding of mRNA and methionyl-tRNAi to the 40S ribosome. The eIF-3 complex specifically targets and initiates translation of a subset of mRNAs involved in cell proliferation. The protein is Eukaryotic translation initiation factor 3 subunit C (nip1) of Aspergillus fumigatus (strain CBS 144.89 / FGSC A1163 / CEA10) (Neosartorya fumigata).